A 467-amino-acid chain; its full sequence is Sialic acid-binding Ig-like lectin 12 (467 aa).

The signal sequence occupies residues methionine 1–glycine 18. Residues glutamine 19–threonine 353 are Extracellular-facing. The Ig-like V-type domain occupies proline 21–methionine 141. Cystine bridges form between cysteine 40-cysteine 176, cysteine 45-cysteine 108, and cysteine 170-cysteine 219. An N-linked (GlcNAc...) asparagine glycan is attached at asparagine 46. An N-acetylneuraminate-binding site is contributed by arginine 126. 2 consecutive Ig-like C2-type domains span residues proline 152 to serine 239 and proline 242 to serine 339. N-linked (GlcNAc...) asparagine glycosylation is found at asparagine 167, asparagine 197, asparagine 216, asparagine 227, asparagine 237, asparagine 244, asparagine 262, asparagine 287, and asparagine 294. Cysteines 278 and 323 form a disulfide. The helical transmembrane segment at phenylalanine 354 to valine 374 threads the bilayer. The Cytoplasmic segment spans residues arginine 375–proline 467. An ITIM motif motif is present at residues isoleucine 430 to leucine 435. Tyrosine 432 and tyrosine 455 each carry phosphotyrosine. The SLAM-like motif signature appears at threonine 453 to isoleucine 458.

It belongs to the immunoglobulin superfamily. SIGLEC (sialic acid binding Ig-like lectin) family. In terms of assembly, homodimer; disulfide-linked. Interacts with PTPN6/SHP-1 and PTPN11/SHP-2 upon phosphorylation. Phosphorylation of Tyr-432 is required for binding to PTPN6 and PTPN11. Phosphorylation of Tyr-455 is involved in binding to PTPN6. Tyr-432 needs to be phosphorylated prior to Tyr-455. In terms of tissue distribution, expressed by monocytic/myeloid lineage cells. Found at higher levels in spleen, liver and heart. Found at lower levels in kidney and lung.

It localises to the membrane. Functionally, putative adhesion molecule that mediates sialic-acid dependent binding to cells. The sialic acid recognition site may be masked by cis interactions with sialic acids on the same cell surface. In the immune response, may act as an inhibitory receptor upon ligand induced tyrosine phosphorylation by recruiting cytoplasmic phosphatase(s) via their SH2 domain(s) that block signal transduction through dephosphorylation of signaling molecules. The chain is Sialic acid-binding Ig-like lectin 12 (Siglec12) from Mus musculus (Mouse).